The following is a 413-amino-acid chain: Inactive serine protease 35 (413 aa).

An N-terminal signal peptide occupies residues 1 to 16; that stretch reads MENMLLWLIFFTPGWT. Asn-90 is a glycosylation site (N-linked (GlcNAc...) asparagine). Positions 124–408 constitute a Peptidase S1 domain; sequence VYGTDSRFSI…ICLWIHGNDA (285 aa). Cysteines 154 and 170 form a disulfide. Residues 191-207 show a composition bias toward basic residues; it reads MRNKSGGKKRRGSKRSR. The tract at residues 191–250 is disordered; that stretch reads MRNKSGGKKRRGSKRSRREASGGDQREGTREHLRERAKGGRRRKKSGRGQRIAEGRPSFQ. A compositionally biased stretch (basic and acidic residues) spans 208 to 228; sequence REASGGDQREGTREHLRERAK. A compositionally biased stretch (basic residues) spans 229–238; sequence GGRRRKKSGR.

Belongs to the peptidase S1 family.

It is found in the secreted. The polypeptide is Inactive serine protease 35 (PRSS35) (Homo sapiens (Human)).